Here is a 556-residue protein sequence, read N- to C-terminus: Delta-1-pyrroline-5-carboxylate dehydrogenase, mitochondrial (556 aa).

A mitochondrion-targeting transit peptide spans 1–17 (MLRARSAVSQSWKGFKT). NAD(+) is bound by residues lysine 226 and 279 to 283 (GSVPT). The Proton acceptor role is filled by glutamate 307. Cysteine 341 functions as the Nucleophile in the catalytic mechanism. Residue glutamate 440 coordinates NAD(+). Serine 506 contributes to the substrate binding site.

It belongs to the aldehyde dehydrogenase family.

The protein resides in the mitochondrion matrix. It catalyses the reaction L-glutamate 5-semialdehyde + NAD(+) + H2O = L-glutamate + NADH + 2 H(+). Its pathway is amino-acid degradation; L-proline degradation into L-glutamate; L-glutamate from L-proline: step 2/2. In terms of biological role, irreversible conversion of delta-1-pyrroline-5-carboxylate (P5C), derived either from proline or ornithine, to glutamate. This is a necessary step in the pathway interconnecting the urea and tricarboxylic acid cycles. The protein is Delta-1-pyrroline-5-carboxylate dehydrogenase, mitochondrial (aldh4a1) of Danio rerio (Zebrafish).